Here is a 309-residue protein sequence, read N- to C-terminus: Homoserine kinase (309 aa).

ATP is bound at residue 95 to 105 (PHGRGLGSSSA).

It belongs to the GHMP kinase family. Homoserine kinase subfamily.

The protein localises to the cytoplasm. The enzyme catalyses L-homoserine + ATP = O-phospho-L-homoserine + ADP + H(+). The protein operates within amino-acid biosynthesis; L-threonine biosynthesis; L-threonine from L-aspartate: step 4/5. Catalyzes the ATP-dependent phosphorylation of L-homoserine to L-homoserine phosphate. The polypeptide is Homoserine kinase (Streptomyces coelicolor (strain ATCC BAA-471 / A3(2) / M145)).